Reading from the N-terminus, the 430-residue chain is MSEEVVQDAPLENNELNAEIDLQKTIQEEYKLWKQNVPFLYDLVITHALEWPSLTIQWLPDKKTIPGTDYSIQRLILGTHTSGNDQNYLQIASVQLPNFDEDTTEFTPSTIRRAQATGSYTIEISQKIPHDGDVNRARYMPQKPEIIATMGEGGNAYIFDTTCHDALTTGEALPQAVLKGHTAEGFGLCWNPNLPGNLATGAEDQVICLWDVQTQSFTSSETKVISPIAKYHRHTDIVNDVQFHPQHEALLASVSDDCTLQIHDTRLNPEEEAPKVIQAHSKAINAVAINPFNDYLLATASADKTVALWDLRNPYQRLHTLEGHEDEVYGLEWSPHDEPILASSSTDRRVCIWDLEKIGEEQTPEDAEDGSPELLFMHGGHTNRISEFSWCPNERWVVGSLADDNILQIWSPSRVIWGRDHVQVSPRDLE.

WD repeat units follow at residues 129–169, 180–220, 233–273, 279–319, and 323–363; these read PHDG…ALTT, GHTA…FTSS, RHTD…EEEA, AHSK…QRLH, and GHED…EEQT. The interaction with the histone H4 N-terminus stretch occupies residues 365-369; sequence EDAED. The stretch at 380–420 is one WD 6 repeat; it reads GHTNRISEFSWCPNERWVVGSLADDNILQIWSPSRVIWGRD. Position 425 is a phosphoserine (S425).

It belongs to the WD repeat RBAP46/RBAP48/MSI1 family. Component of the HAT-B complex composed of at least hat1 and hat2. The HAT-B complex binds to histone H4 tail. Component of the CENP-A recruiting complex composed of at least mis16, mis19, mis19 and mis20.

The protein localises to the cytoplasm. Its subcellular location is the nucleus. The protein resides in the chromosome. It localises to the centromere. It is found in the kinetochore. Its function is as follows. Regulatory subunit of the histone acetylase B (HAT-B) complex. The complex acetylates 'Lys-12' of histone H4 which is required for telomeric silencing. Component of the CENP-A recruiting complex that ensures the integrity of mitotic spindles through maintenance of kinetochore factors mis6/CENP-I and cnp1/CENP-A. Maintains the deacetylated state of histones specifically in the central core of the centromeres. This is Histone acetyltransferase type B subunit 2 (mis16) from Schizosaccharomyces pombe (strain 972 / ATCC 24843) (Fission yeast).